A 721-amino-acid chain; its full sequence is Procollagen-lysine,2-oxoglutarate 5-dioxygenase (721 aa).

Residues 1-21 (MRIQQSALLLLLLAVTSQGDA) form the signal peptide. Asparagine 504, asparagine 530, and asparagine 536 each carry an N-linked (GlcNAc...) asparagine glycan. The region spanning 627-721 (NPPRALMNFM…RYIMISFIDP (95 aa)) is the Fe2OG dioxygenase domain. The Fe cation site is built by histidine 650 and aspartate 652. Residue asparagine 680 is glycosylated (N-linked (GlcNAc...) asparagine). Histidine 702 contacts Fe cation. Residue asparagine 709 is glycosylated (N-linked (GlcNAc...) asparagine). Arginine 712 lines the 2-oxoglutarate pocket.

The cofactor is L-ascorbate. Fe(2+) is required as a cofactor.

It is found in the endoplasmic reticulum. The protein localises to the secreted. The protein resides in the extracellular space. It carries out the reaction L-lysyl-[collagen] + 2-oxoglutarate + O2 = (5R)-5-hydroxy-L-lysyl-[collagen] + succinate + CO2. Functionally, forms hydroxylysine residues in collagen type IV. Required for the secretion of collagen type IV (vkg) from haemocytes, fat body and follicle cells. This Drosophila melanogaster (Fruit fly) protein is Procollagen-lysine,2-oxoglutarate 5-dioxygenase.